Reading from the N-terminus, the 124-residue chain is Small ribosomal subunit protein uS12 (124 aa).

A disordered region spans residues 8 to 28 (IRSAREKTDKKTKSPALKSCP). Over residues 10–19 (SAREKTDKKT) the composition is skewed to basic and acidic residues. Position 89 is a 3-methylthioaspartic acid (Asp89).

This sequence belongs to the universal ribosomal protein uS12 family. Part of the 30S ribosomal subunit. Contacts proteins S8 and S17. May interact with IF1 in the 30S initiation complex.

In terms of biological role, with S4 and S5 plays an important role in translational accuracy. Interacts with and stabilizes bases of the 16S rRNA that are involved in tRNA selection in the A site and with the mRNA backbone. Located at the interface of the 30S and 50S subunits, it traverses the body of the 30S subunit contacting proteins on the other side and probably holding the rRNA structure together. The combined cluster of proteins S8, S12 and S17 appears to hold together the shoulder and platform of the 30S subunit. The polypeptide is Small ribosomal subunit protein uS12 (Arthrospira platensis (Spirulina platensis)).